The chain runs to 125 residues: Fluoride-specific ion channel FluC (125 aa).

4 consecutive transmembrane segments (helical) span residues A6–V26, W36–A56, F68–A88, and W97–L117. Positions 76 and 79 each coordinate Na(+).

The protein belongs to the fluoride channel Fluc/FEX (TC 1.A.43) family.

It is found in the cell inner membrane. The enzyme catalyses fluoride(in) = fluoride(out). Its activity is regulated as follows. Na(+) is not transported, but it plays an essential structural role and its presence is essential for fluoride channel function. In terms of biological role, fluoride-specific ion channel. Important for reducing fluoride concentration in the cell, thus reducing its toxicity. The sequence is that of Fluoride-specific ion channel FluC from Nitrosococcus oceani (strain ATCC 19707 / BCRC 17464 / JCM 30415 / NCIMB 11848 / C-107).